Here is a 324-residue protein sequence, read N- to C-terminus: Alkanal monooxygenase beta chain (324 aa).

The protein belongs to the bacterial luciferase oxidoreductase family. In terms of assembly, heterodimer of an alpha and a beta chain.

It catalyses the reaction a long-chain fatty aldehyde + FMNH2 + O2 = a long-chain fatty acid + hnu + FMN + H2O + 2 H(+). Its function is as follows. Light-emitting reaction in luminous bacteria. The specific role of the beta subunit is unknown, but it is absolutely required for bioluminescence activity. This Photorhabdus luminescens (Xenorhabdus luminescens) protein is Alkanal monooxygenase beta chain (luxB).